The chain runs to 492 residues: Transcript termination protein OPG145 (492 aa).

Positions 100-256 (MIELKRPLYI…NSIINIAKLS (157 aa)) constitute a Helicase ATP-binding domain. 113-120 (LACGFGKT) is an ATP binding site. A DEAH box motif is present at residues 206-209 (DESH).

The protein belongs to the helicase family. Poxviruses subfamily. Interacts with OPG087. Might be part of a transcription complex composed at least of OPG087, OPG110, and OPG145.

Its subcellular location is the virion. DNA helicase which seems to act as a postreplicative transcription termination factor. Involved in ATP-dependent release of nascent RNA. Forms a stable complex with single-stranded DNA, and to a lesser extent RNA. The sequence is that of Transcript termination protein OPG145 (OPG145) from Cynomys gunnisoni (Gunnison's prairie dog).